A 354-amino-acid polypeptide reads, in one-letter code: Alanine racemase (354 aa).

The active-site Proton acceptor; specific for D-alanine is K33. K33 carries the N6-(pyridoxal phosphate)lysine modification. R127 contributes to the substrate binding site. The active-site Proton acceptor; specific for L-alanine is the Y251. M299 serves as a coordination point for substrate.

Belongs to the alanine racemase family. Requires pyridoxal 5'-phosphate as cofactor.

The enzyme catalyses L-alanine = D-alanine. Its pathway is amino-acid biosynthesis; D-alanine biosynthesis; D-alanine from L-alanine: step 1/1. Catalyzes the interconversion of L-alanine and D-alanine. May also act on other amino acids. The protein is Alanine racemase (alr) of Fusobacterium nucleatum subsp. nucleatum (strain ATCC 25586 / DSM 15643 / BCRC 10681 / CIP 101130 / JCM 8532 / KCTC 2640 / LMG 13131 / VPI 4355).